Consider the following 1107-residue polypeptide: Voltage-gated delayed rectifier potassium channel KCNH8 (1107 aa).

Residues M1–D225 are Cytoplasmic-facing. Residues I18–K90 form the PAS domain. A PAC domain is found at F93 to K145. A helical membrane pass occupies residues W226 to I246. Topologically, residues G247–R255 are extracellular. The helical transmembrane segment at S256–F276 threads the bilayer. The Cytoplasmic segment spans residues R277–Y298. Residues V299–F319 traverse the membrane as a helical segment. Residue N320 is glycosylated (N-linked (GlcNAc...) asparagine). Residues N320 to V327 are Extracellular-facing. Residues H328 to Y348 traverse the membrane as a helical; Voltage-sensor segment. The Cytoplasmic segment spans residues S349–T357. A helical membrane pass occupies residues L358–G378. Over K379–S419 the chain is Extracellular. N409 carries an N-linked (GlcNAc...) asparagine glycan. Residues A420–V440 constitute an intramembrane region (pore-forming). The Selectivity filter signature appears at S434–N439. Residues S441–K448 lie on the Extracellular side of the membrane. Residues I449 to V469 traverse the membrane as a helical segment. Residues T470–V1107 lie on the Cytoplasmic side of the membrane. The cNMP-binding domain stretch occupies residues L551–D668. A compositionally biased stretch (polar residues) spans S686 to I702. 4 disordered regions span residues S686 to V742, H764 to E791, E818 to G847, and V961 to P989. Acidic residues predominate over residues V710 to A724. Residues V961–R972 show a composition bias toward polar residues.

The protein belongs to the potassium channel family. H (Eag) (TC 1.A.1.20) subfamily. Kv12.1/KCNH8 sub-subfamily. In terms of assembly, the potassium channel is probably composed of a homo- or heterotetrameric complex of pore-forming alpha subunits that can associate with modulating beta subunits. In terms of tissue distribution, primarily expressed in the nervous system.

It is found in the membrane. The enzyme catalyses K(+)(in) = K(+)(out). Functionally, pore-forming (alpha) subunit of a voltage-gated delayed rectifier potassium channel that mediates outward-rectifying potassium currents. Elicits a slowly activating, non-inactivating and slowly deactivation outwards potassium current at depolarizating voltages from -30 mV to +50mV. Shows no obvious change in the activation rate from different holding potentials. Activation is strongly dependent on the pH of the external solution. This chain is Voltage-gated delayed rectifier potassium channel KCNH8, found in Homo sapiens (Human).